Here is a 284-residue protein sequence, read N- to C-terminus: 4-diphosphocytidyl-2-C-methyl-D-erythritol kinase (284 aa).

Lysine 17 is a catalytic residue. 100–110 lines the ATP pocket; it reads PMGGGLGGGSS. Residue aspartate 142 is part of the active site.

Belongs to the GHMP kinase family. IspE subfamily.

The enzyme catalyses 4-CDP-2-C-methyl-D-erythritol + ATP = 4-CDP-2-C-methyl-D-erythritol 2-phosphate + ADP + H(+). It participates in isoprenoid biosynthesis; isopentenyl diphosphate biosynthesis via DXP pathway; isopentenyl diphosphate from 1-deoxy-D-xylulose 5-phosphate: step 3/6. Functionally, catalyzes the phosphorylation of the position 2 hydroxy group of 4-diphosphocytidyl-2C-methyl-D-erythritol. The chain is 4-diphosphocytidyl-2-C-methyl-D-erythritol kinase from Aromatoleum aromaticum (strain DSM 19018 / LMG 30748 / EbN1) (Azoarcus sp. (strain EbN1)).